Here is a 443-residue protein sequence, read N- to C-terminus: Phosphoglucosamine mutase (443 aa).

S101 acts as the Phosphoserine intermediate in catalysis. Mg(2+) contacts are provided by S101, D239, D241, and D243. Position 101 is a phosphoserine (S101).

It belongs to the phosphohexose mutase family. Requires Mg(2+) as cofactor. Activated by phosphorylation.

The catalysed reaction is alpha-D-glucosamine 1-phosphate = D-glucosamine 6-phosphate. In terms of biological role, catalyzes the conversion of glucosamine-6-phosphate to glucosamine-1-phosphate. In Francisella tularensis subsp. holarctica (strain FTNF002-00 / FTA), this protein is Phosphoglucosamine mutase.